Here is a 491-residue protein sequence, read N- to C-terminus: MNSKKLNIGPKDIINSLPEALIYHILSFLSTKEAAITSLLSRKWRYFFAFVPNLDFDDPVRMQPDMGNQEETEIHTSFMDFVDRVLALRGNSHVNKFSLKCGNGVDGVGVTRWILNTLELSVSELDLSIASDTTYLFPSKVFVSKSLVRLRIEARNGLAFGSLVIDVGDVSLPKLKTLYLDSVELDYQIICLAKLLSGCHVLEELVMIDVVWNFWESCSASIPTLKRLTFFTEEGWNNPPPSVTFDNPALVYFEYTDTVALKYEKVNFDSLVEARLGLRVGYEESENPIQVPFGFPFPLIEYAMVGDATDLLMGIRNVQVLYLYASTVEVLTFRCKAIPIFNNLTRLTIESNTKVGWDSLPNLLKNCPNLKTLVFQGLLHKATDRCGDMCPCKPPENIHTCLSSSPVKVLEILKFGEINDKTELEQTKHFLELMPHLEQLNIYYDTSVDDNLVKVSKQLQEIPGVASAKCKVQVISDNLTLSVTLPSSSSI.

The 47-residue stretch at 11-57 folds into the F-box domain; it reads KDIINSLPEALIYHILSFLSTKEAAITSLLSRKWRYFFAFVPNLDFD. LRR repeat units follow at residues 127–154, 156–182, 184–209, 325–351, 352–377, 419–444, and 472–491; these read LSIA…RIEA, NGLA…YLDS, ELDY…VMID, ASTV…TIES, NTKV…VFQG, NDKT…NIYY, and VQVI…SSSI.

This is Putative F-box/LRR-repeat protein At3g59230 from Arabidopsis thaliana (Mouse-ear cress).